A 225-amino-acid polypeptide reads, in one-letter code: MNSIEFPLLDRTTQNSVISTTSNDLSNWSRLSSLWPLLYGTSCCFIEFASLIGSRFDFDRYGLVPRSSPRQADLILTAGTVTMKMAPSLVRLYEQMPEPKYVIAMGACTITGGMFSTDSYSTVRGVDKLIPVDVYLPGCPPKPEAVIDAITKLRKKISREIYEDRIRSQQENRCFTTNHKFHVGRSTHTGNYDQRLLYQSPSTSEIPLETFFKYKSSVSSPEFVN.

Residues C43, C44, C108, and C139 each coordinate [4Fe-4S] cluster.

Belongs to the complex I 20 kDa subunit family. In terms of assembly, NDH is composed of at least 16 different subunits, 5 of which are encoded in the nucleus. [4Fe-4S] cluster serves as cofactor.

Its subcellular location is the plastid. The protein resides in the chloroplast thylakoid membrane. It carries out the reaction a plastoquinone + NADH + (n+1) H(+)(in) = a plastoquinol + NAD(+) + n H(+)(out). It catalyses the reaction a plastoquinone + NADPH + (n+1) H(+)(in) = a plastoquinol + NADP(+) + n H(+)(out). Its function is as follows. NDH shuttles electrons from NAD(P)H:plastoquinone, via FMN and iron-sulfur (Fe-S) centers, to quinones in the photosynthetic chain and possibly in a chloroplast respiratory chain. The immediate electron acceptor for the enzyme in this species is believed to be plastoquinone. Couples the redox reaction to proton translocation, and thus conserves the redox energy in a proton gradient. The protein is NAD(P)H-quinone oxidoreductase subunit K, chloroplastic of Vitis vinifera (Grape).